A 280-amino-acid chain; its full sequence is 3-methyl-2-oxobutanoate hydroxymethyltransferase (280 aa).

Mg(2+) is bound by residues Asp-60 and Asp-99. 3-methyl-2-oxobutanoate is bound by residues 60–61, Asp-99, and Lys-129; that span reads DS. Glu-131 contacts Mg(2+). Residue Glu-198 is the Proton acceptor of the active site.

Belongs to the PanB family. Homodecamer; pentamer of dimers. Mg(2+) is required as a cofactor.

The protein localises to the cytoplasm. It carries out the reaction 3-methyl-2-oxobutanoate + (6R)-5,10-methylene-5,6,7,8-tetrahydrofolate + H2O = 2-dehydropantoate + (6S)-5,6,7,8-tetrahydrofolate. It functions in the pathway cofactor biosynthesis; (R)-pantothenate biosynthesis; (R)-pantoate from 3-methyl-2-oxobutanoate: step 1/2. Its function is as follows. Catalyzes the reversible reaction in which hydroxymethyl group from 5,10-methylenetetrahydrofolate is transferred onto alpha-ketoisovalerate to form ketopantoate. This chain is 3-methyl-2-oxobutanoate hydroxymethyltransferase, found in Thermobifida fusca (strain YX).